Reading from the N-terminus, the 727-residue chain is NADH-ubiquinone oxidoreductase 75 kDa subunit, mitochondrial (727 aa).

The N-terminal 23 residues, 1 to 23 (MLRIPVRKALVVLSKSPKGCVRT), are a transit peptide targeting the mitochondrion. The region spanning 30-108 (NLIEVFVDGQ…GWNILTNSKK (79 aa)) is the 2Fe-2S ferredoxin-type domain. 3 residues coordinate [2Fe-2S] cluster: Cys-64, Cys-75, and Cys-78. Lys-84 bears the N6-acetyllysine mark. Residue Cys-92 coordinates [2Fe-2S] cluster. The 4Fe-4S His(Cys)3-ligated-type domain occupies 108–147 (KSKKAREGVMEFLLANHPLDCPICDQGGECDLQDQSMMFG). [4Fe-4S] cluster is bound by residues His-124, Cys-128, Cys-131, Cys-137, Cys-176, Cys-179, Cys-182, and Cys-226. A 4Fe-4S Mo/W bis-MGD-type domain is found at 245-301 (TRKTESIDVMDAVGSNIVVSTRTGEVMRILPRMHEDINEEWISDKTRFAYDGLKRQR). An N6-acetyllysine mark is found at Lys-467, Lys-499, and Lys-709.

Belongs to the complex I 75 kDa subunit family. In terms of assembly, core subunit of respiratory chain NADH dehydrogenase (Complex I) which is composed of 45 different subunits. This is the largest subunit of complex I and it is a component of the iron-sulfur (IP) fragment of the enzyme. Complex I associates with ubiquinol-cytochrome reductase complex (Complex III) to form supercomplexes. Interacts with MDM2 and AKAP1. It depends on [2Fe-2S] cluster as a cofactor. [4Fe-4S] cluster serves as cofactor.

It localises to the mitochondrion inner membrane. The enzyme catalyses a ubiquinone + NADH + 5 H(+)(in) = a ubiquinol + NAD(+) + 4 H(+)(out). In terms of biological role, core subunit of the mitochondrial membrane respiratory chain NADH dehydrogenase (Complex I) which catalyzes electron transfer from NADH through the respiratory chain, using ubiquinone as an electron acceptor. Essential for catalysing the entry and efficient transfer of electrons within complex I. Plays a key role in the assembly and stability of complex I and participates in the association of complex I with ubiquinol-cytochrome reductase complex (Complex III) to form supercomplexes. The protein is NADH-ubiquinone oxidoreductase 75 kDa subunit, mitochondrial (NDUFS1) of Pan troglodytes (Chimpanzee).